Reading from the N-terminus, the 160-residue chain is Ribosome maturation factor RimP (160 aa).

This sequence belongs to the RimP family.

The protein localises to the cytoplasm. Functionally, required for maturation of 30S ribosomal subunits. This chain is Ribosome maturation factor RimP, found in Syntrophus aciditrophicus (strain SB).